The following is a 100-amino-acid chain: C-X-C motif chemokine 11 (100 aa).

The first 21 residues, Met1–Gly21, serve as a signal peptide directing secretion. 2 disulfides stabilise this stretch: Cys30-Cys57 and Cys32-Cys74.

This sequence belongs to the intercrine alpha (chemokine CxC) family. As to quaternary structure, interacts with TNFAIP6 (via Link domain).

Its subcellular location is the secreted. Functionally, chemotactic for interleukin-activated T-cells but not unstimulated T-cells, neutrophils or monocytes. Induces calcium release in activated T-cells. Binds to CXCR3. May play an important role in CNS diseases which involve T-cell recruitment. May play a role in skin immune responses. The polypeptide is C-X-C motif chemokine 11 (Cxcl11) (Mus musculus (Mouse)).